Consider the following 479-residue polypeptide: Anaerobic nitric oxide reductase flavorubredoxin (479 aa).

The interval 30–210 is zinc metallo-hydrolase; it reads LRGSSYNSYL…PFSRLVTPKI (181 aa). The Fe cation site is built by H79, E81, D83, H147, D166, and H227. A Flavodoxin-like domain is found at 254-393; it reads ITIFYDTMSN…LCRQHGRDIA (140 aa). FMN contacts are provided by residues 260-264 and 342-369; these read TMSNN and AFGS…EMSL. A Rubredoxin-like domain is found at 423–474; that stretch reads GPKMQCSVCQWIYDPALGEPLQDVAPGTPWSEVPDNFLCPECSLGKDVFDVL. Residues C428, C431, C461, and C464 each contribute to the Fe cation site.

This sequence in the N-terminal section; belongs to the zinc metallo-hydrolase group 3 family. In terms of assembly, homotetramer. It depends on Fe cation as a cofactor. Requires FMN as cofactor.

The protein localises to the cytoplasm. It functions in the pathway nitrogen metabolism; nitric oxide reduction. Functionally, anaerobic nitric oxide reductase; uses NADH to detoxify nitric oxide (NO), protecting several 4Fe-4S NO-sensitive enzymes. Has at least 2 reductase partners, only one of which (NorW, flavorubredoxin reductase) has been identified. NO probably binds to the di-iron center; electrons enter from the NorW at rubredoxin and are transferred sequentially to the FMN center and the di-iron center. Also able to function as an aerobic oxygen reductase. The protein is Anaerobic nitric oxide reductase flavorubredoxin of Salmonella paratyphi A (strain ATCC 9150 / SARB42).